A 26-amino-acid polypeptide reads, in one-letter code: Hemocyanin subunit 5 (26 aa).

This sequence belongs to the tyrosinase family. Hemocyanin subfamily. Hemolymph.

It localises to the secreted. The protein localises to the extracellular space. Functionally, hemocyanins are copper-containing oxygen carriers occurring freely dissolved in the hemolymph of many mollusks and arthropods. The protein is Hemocyanin subunit 5 of Maja squinado (Mediterranean spider crab).